The chain runs to 209 residues: Kynurenine formamidase (209 aa).

Phenylalanine 18 provides a ligand contact to substrate. Zn(2+) is bound by residues histidine 48, histidine 52, and aspartate 54. Histidine 58 acts as the Proton donor/acceptor in catalysis. Zn(2+)-binding residues include histidine 160 and glutamate 172.

The protein belongs to the Cyclase 1 superfamily. KynB family. In terms of assembly, homodimer. Zn(2+) serves as cofactor.

It catalyses the reaction N-formyl-L-kynurenine + H2O = L-kynurenine + formate + H(+). It functions in the pathway amino-acid degradation; L-tryptophan degradation via kynurenine pathway; L-kynurenine from L-tryptophan: step 2/2. Functionally, catalyzes the hydrolysis of N-formyl-L-kynurenine to L-kynurenine, the second step in the kynurenine pathway of tryptophan degradation. The protein is Kynurenine formamidase of Bordetella petrii (strain ATCC BAA-461 / DSM 12804 / CCUG 43448).